The sequence spans 675 residues: Pescadillo homolog (675 aa).

Positions 308–317 (AGLDEAKEEP) are enriched in basic and acidic residues. The interval 308 to 330 (AGLDEAKEEPAAETTEESSETID) is disordered. The 120-residue stretch at 351–470 (EAGSLFAPFT…KLVRPDLYAP (120 aa)) folds into the BRCT domain. The tract at residues 474–675 (LPPHLSPWVK…RRKLEKEATK (202 aa)) is disordered. Acidic residues predominate over residues 497–517 (EQEEEGEAELDEDSDEEMEEA). The segment covering 518-529 (ANDKKAEAKADV) has biased composition (basic and acidic residues). Acidic residues-rich tracts occupy residues 531 to 540 (SESEDEDESV) and 548 to 580 (GTDDDESESEEEEEDFGGFEEEEAASESEDEEE). Residues 567 to 675 (EEEEAASESE…RRKLEKEATK (109 aa)) are a coiled coil. Residues 581–591 (AARTQHQKELE) are compositionally biased toward basic and acidic residues. Residues 612 to 623 (KASQAKKIAAKK) are compositionally biased toward basic residues. Basic and acidic residues predominate over residues 624 to 634 (RKEEEELERQK).

It belongs to the pescadillo family. In terms of assembly, component of the NOP7 complex, composed of erb1, nop7 and ytm1. The complex is held together by erb1, which interacts with nop7 via its N-terminal domain and with ytm1 via a high-affinity interaction between the seven-bladed beta-propeller domains of the 2 proteins. The NOP7 complex associates with the 66S pre-ribosome.

Its subcellular location is the nucleus. It is found in the nucleolus. The protein resides in the nucleoplasm. Component of the NOP7 complex, which is required for maturation of the 25S and 5.8S ribosomal RNAs and formation of the 60S ribosome. The polypeptide is Pescadillo homolog (nop7) (Neosartorya fischeri (strain ATCC 1020 / DSM 3700 / CBS 544.65 / FGSC A1164 / JCM 1740 / NRRL 181 / WB 181) (Aspergillus fischerianus)).